A 242-amino-acid polypeptide reads, in one-letter code: Neuromodulin (242 aa).

The interval 1 to 242 (MLCCMRRTKQ…EEREADQEHA (242 aa)) is disordered. Residues Cys3 and Cys4 are each lipidated (S-palmitoyl cysteine). A compositionally biased stretch (basic and acidic residues) spans 9 to 32 (KQVEKNDEDQKIEQDGIKPEDKAH). The IQ domain maps to 31–60 (AHKAATKIQASFRGHITRKKLKGEKKGDAP). The residue at position 41 (Ser41) is a Phosphoserine; by PHK and PKC. Over residues 66 to 84 (ANEKDEAAVAEGTEKKEGE) the composition is skewed to basic and acidic residues. A compositionally biased stretch (low complexity) spans 85 to 97 (GSTPAEAAPGAGP). Ser86 carries the phosphoserine modification. A compositionally biased stretch (basic and acidic residues) spans 98–118 (KPEEKTGKAGETPSEEKKGEG). The span at 119-134 (APDAATEQAAPQAPAP) shows a compositional bias: low complexity. Residues 143–158 (ETESATKASTDNSPSS) are compositionally biased toward polar residues. Phosphoserine is present on residues Ser155, Ser157, and Ser158. Positions 159 to 171 (KAEDAPAKEEPKQ) are enriched in basic and acidic residues. Positions 172–204 (ADVPAAVTAAAATAPAAEDAAAMATAQPPTETA) are enriched in low complexity. 2 positions are modified to phosphoserine; by CK2: Ser206 and Ser207. Over residues 209-242 (AEEKIEAVDETKPKDSARQDEGKGEEREADQEHA) the composition is skewed to basic and acidic residues.

It belongs to the neuromodulin family. As to quaternary structure, identified in a complex containing FGFR4, NCAM1, CDH2, PLCG1, FRS2, SRC, SHC1, GAP43 and CTTN. Interacts (via IQ domain) with calmodulin. Binds calmodulin with a greater affinity in the absence of Ca(2+) than in its presence. Post-translationally, phosphorylated. Phosphorylation of this protein by a protein kinase C is specifically correlated with certain forms of synaptic plasticity. Palmitoylated by ZDHHC3. Palmitoylation is regulated by ARF6 and is essential for plasma membrane association and axonal and dendritic filopodia induction. Deacylated by LYPLA2.

Its subcellular location is the cell membrane. It localises to the cell projection. The protein localises to the growth cone membrane. It is found in the synapse. The protein resides in the filopodium membrane. Its subcellular location is the perikaryon. It localises to the dendrite. The protein localises to the axon. It is found in the cytoplasm. Its function is as follows. This protein is associated with nerve growth. It is a major component of the motile 'growth cones' that form the tips of elongating axons. Plays a role in axonal and dendritic filopodia induction. The sequence is that of Neuromodulin (GAP43) from Bos taurus (Bovine).